The primary structure comprises 487 residues: Betaine aldehyde dehydrogenase (487 aa).

2 residues coordinate K(+): isoleucine 27 and aspartate 93. 149 to 151 lines the NAD(+) pocket; it reads GAW. Residue lysine 161 is the Charge relay system of the active site. NAD(+) contacts are provided by residues 175–178 and 228–231; these read KPSE and SVPT. The Proton acceptor role is filled by glutamate 249. NAD(+) contacts are provided by glycine 251, cysteine 283, and glutamate 384. Cysteine 283 serves as the catalytic Nucleophile. Position 283 is a cysteine sulfenic acid (-SOH) (cysteine 283). K(+) contacts are provided by lysine 454 and glycine 457. Glutamate 461 (charge relay system) is an active-site residue.

The protein belongs to the aldehyde dehydrogenase family. Dimer of dimers. K(+) is required as a cofactor.

It carries out the reaction betaine aldehyde + NAD(+) + H2O = glycine betaine + NADH + 2 H(+). It participates in amine and polyamine biosynthesis; betaine biosynthesis via choline pathway; betaine from betaine aldehyde: step 1/1. In terms of biological role, involved in the biosynthesis of the osmoprotectant glycine betaine. Catalyzes the irreversible oxidation of betaine aldehyde to the corresponding acid. This is Betaine aldehyde dehydrogenase from Mesorhizobium japonicum (strain LMG 29417 / CECT 9101 / MAFF 303099) (Mesorhizobium loti (strain MAFF 303099)).